The chain runs to 730 residues: Kinesin-like protein KIF2C (730 aa).

The interval 1–256 (MERLVATRLV…MDCHRISMAD (256 aa)) is globular. Residues 79 to 98 (NMPPQRNVSSQNHKRKTISK) form a disordered region. A negative regulator of microtubule-binding region spans residues 211 to 242 (EQRAQNYERRMKRAQDYDTSVPNWEFGKMIKE). The Kinesin motor domain maps to 262–592 (RICVCVRKRP…LRYADRVKEL (331 aa)). Residues Arg268 and 352–359 (GQTGSGKT) each bind ATP. Residues 599 to 730 (TNDDNLQMED…QISKKKRSNK (132 aa)) are a coiled coil.

It belongs to the TRAFAC class myosin-kinesin ATPase superfamily. Kinesin family. MCAK/KIF2 subfamily.

It is found in the cytoplasm. The protein resides in the cytoskeleton. The protein localises to the nucleus. Its subcellular location is the chromosome. It localises to the centromere. It is found in the kinetochore. Its function is as follows. Promotes ATP-dependent removal of tubulin dimers from microtubules. Regulates the turnover of microtubules at the kinetochore and functions in chromosome segregation during mitosis. May play a role in chromosome congression and may be required for the lateral to end-on conversion of the chromosome-microtubule attachment. This is Kinesin-like protein KIF2C (kif2c) from Xenopus laevis (African clawed frog).